A 635-amino-acid chain; its full sequence is CCR4-NOT transcription complex subunit 10 (635 aa).

Thr-45 is subject to Phosphothreonine. The stretch at 131–165 forms a coiled coil; the sequence is LVARLEALEKAMAALVATLQLQLLLATNQLNRAEA. 2 disordered regions span residues 396–416 and 450–474; these read EERQ…QSAG and SEDV…DNNF. Positions 456–470 are enriched in basic and acidic residues; the sequence is PEPKDPTQESWRHPQ.

This sequence belongs to the CNOT10 family. Component of the CCR4-NOT complex. CNOT10 and CNOT11 form a subcomplex docked to the CNOT1 scaffold.

It is found in the cytoplasm. The protein localises to the nucleus. Functionally, component of the CCR4-NOT complex which is one of the major cellular mRNA deadenylases and is linked to various cellular processes including bulk mRNA degradation, miRNA-mediated repression, translational repression during translational initiation and general transcription regulation. Additional complex functions may be a consequence of its influence on mRNA expression. Is not required for association of CNOT7 to the CCR4-NOT complex. This Drosophila melanogaster (Fruit fly) protein is CCR4-NOT transcription complex subunit 10 (Not10).